Consider the following 622-residue polypeptide: Modification methylase LlaI (622 aa).

The protein belongs to the N(4)/N(6)-methyltransferase family.

It carries out the reaction a 2'-deoxyadenosine in DNA + S-adenosyl-L-methionine = an N(6)-methyl-2'-deoxyadenosine in DNA + S-adenosyl-L-homocysteine + H(+). An alpha subtype methylase that modifies unknown specific adenine residues, and protects the DNA from cleavage by the LlaI endonuclease. This chain is Modification methylase LlaI, found in Lactococcus lactis subsp. lactis (Streptococcus lactis).